Here is a 634-residue protein sequence, read N- to C-terminus: DNA-directed RNA polymerase subunit gamma (634 aa).

The Zn(2+) site is built by Cys-74, Cys-76, Cys-89, and Cys-92. Mg(2+)-binding residues include Asp-471, Asp-473, and Asp-475.

This sequence belongs to the RNA polymerase beta' chain family. RpoC1 subfamily. In terms of assembly, in cyanobacteria the RNAP catalytic core is composed of 2 alpha, 1 beta, 1 beta', 1 gamma and 1 omega subunit. When a sigma factor is associated with the core the holoenzyme is formed, which can initiate transcription. The cofactor is Mg(2+). It depends on Zn(2+) as a cofactor.

It carries out the reaction RNA(n) + a ribonucleoside 5'-triphosphate = RNA(n+1) + diphosphate. In terms of biological role, DNA-dependent RNA polymerase catalyzes the transcription of DNA into RNA using the four ribonucleoside triphosphates as substrates. This Synechococcus sp. (strain CC9605) protein is DNA-directed RNA polymerase subunit gamma.